A 90-amino-acid polypeptide reads, in one-letter code: Protein A54 (90 aa).

In Homo sapiens (Human), this protein is Protein A54.